The sequence spans 211 residues: tRNA (guanine-N(7)-)-methyltransferase (211 aa).

S-adenosyl-L-methionine is bound by residues Glu-43, Asp-68, and Asn-117. Residues Lys-121, Asp-153, and 190–193 (TEYE) each bind substrate.

The protein belongs to the class I-like SAM-binding methyltransferase superfamily. TrmB family.

The catalysed reaction is guanosine(46) in tRNA + S-adenosyl-L-methionine = N(7)-methylguanosine(46) in tRNA + S-adenosyl-L-homocysteine. The protein operates within tRNA modification; N(7)-methylguanine-tRNA biosynthesis. In terms of biological role, catalyzes the formation of N(7)-methylguanine at position 46 (m7G46) in tRNA. The sequence is that of tRNA (guanine-N(7)-)-methyltransferase from Clostridium acetobutylicum (strain ATCC 824 / DSM 792 / JCM 1419 / IAM 19013 / LMG 5710 / NBRC 13948 / NRRL B-527 / VKM B-1787 / 2291 / W).